Consider the following 156-residue polypeptide: Small ribosomal subunit protein uS7 (156 aa).

This sequence belongs to the universal ribosomal protein uS7 family. Part of the 30S ribosomal subunit. Contacts proteins S9 and S11.

In terms of biological role, one of the primary rRNA binding proteins, it binds directly to 16S rRNA where it nucleates assembly of the head domain of the 30S subunit. Is located at the subunit interface close to the decoding center, probably blocks exit of the E-site tRNA. This Streptococcus uberis (strain ATCC BAA-854 / 0140J) protein is Small ribosomal subunit protein uS7.